Consider the following 506-residue polypeptide: ATP synthase subunit alpha (506 aa).

Residue 169 to 176 (GDRQTGKT) coordinates ATP.

Belongs to the ATPase alpha/beta chains family. In terms of assembly, F-type ATPases have 2 components, CF(1) - the catalytic core - and CF(0) - the membrane proton channel. CF(1) has five subunits: alpha(3), beta(3), gamma(1), delta(1), epsilon(1). CF(0) has three main subunits: a(1), b(2) and c(9-12). The alpha and beta chains form an alternating ring which encloses part of the gamma chain. CF(1) is attached to CF(0) by a central stalk formed by the gamma and epsilon chains, while a peripheral stalk is formed by the delta and b chains.

It localises to the cell membrane. It carries out the reaction ATP + H2O + 4 H(+)(in) = ADP + phosphate + 5 H(+)(out). Its function is as follows. Produces ATP from ADP in the presence of a proton gradient across the membrane. The alpha chain is a regulatory subunit. This Acetivibrio thermocellus (strain ATCC 27405 / DSM 1237 / JCM 9322 / NBRC 103400 / NCIMB 10682 / NRRL B-4536 / VPI 7372) (Clostridium thermocellum) protein is ATP synthase subunit alpha.